The primary structure comprises 221 residues: Protein OPG170 (221 aa).

A signal peptide spans 1–17 (MYLLFIILMYLLPFSFQ). The N-linked (GlcNAc...) asparagine; by host glycan is linked to Asn-72.

Belongs to the orthopoxvirus OPG170 family.

The protein localises to the secreted. Its function is as follows. May interact with several cellular chemokines to interfere with chemokine-glycosaminoglycan (GAG) interactions at the cell surface to alter chemotaxis of nearby responsive cells. The polypeptide is Protein OPG170 (OPG170) (Monkeypox virus).